The primary structure comprises 148 residues: Ribonuclease H (148 aa).

Positions 3 to 144 constitute an RNase H type-1 domain; it reads DKEQVVIYTD…ADQLANRGVA (142 aa). The Mg(2+) site is built by Asp-12, Glu-50, Asp-72, and Asp-136. Positions 125–148 are disordered; it reads GHTGDPGNERADQLANRGVAELPR.

The protein belongs to the RNase H family. In terms of assembly, monomer. It depends on Mg(2+) as a cofactor.

It is found in the cytoplasm. The enzyme catalyses Endonucleolytic cleavage to 5'-phosphomonoester.. Endonuclease that specifically degrades the RNA of RNA-DNA hybrids. This is Ribonuclease H from Pseudomonas aeruginosa (strain LESB58).